A 223-amino-acid polypeptide reads, in one-letter code: Ras-related protein Rab-21 (223 aa).

The residue at position 2 (Ala2) is an N-acetylalanine. 10 residues coordinate GTP: Gly26, Gly29, Lys30, Thr31, Ser32, Asn43, Asp44, His46, Thr48, and Thr49. Residue Thr31 coordinates Mg(2+). The short motif at 41–54 is the Switch 1 element; it reads KFNDKHITTLQASF. Residues Thr49 and Asp72 each contribute to the Mg(2+) site. The short motif at 74–92 is the Switch 2 element; sequence AGQERFHALGPIYYRDSNG. Positions 75, 130, 131, 133, 161, and 162 each coordinate GTP. 2 S-geranylgeranyl cysteine lipidation sites follow: Cys219 and Cys220. Cys220 is subject to Cysteine methyl ester. Positions 221-223 are cleaved as a propeptide — removed in mature form; that stretch reads SSG.

The protein belongs to the small GTPase superfamily. Rab family. Interacts with the cytoplasmic tail of integrins ITGA1, ITGA2, ITGA5, ITGA6, ITGA11 and ITGB1; this interaction is dependent upon its GDP/GTP cycle. Interacts with ANKRD27. Interacts (active GTP-bound form) with TMED10; the interaction is indirect and regulates TMED10 abundance and localization at the Golgi. Mg(2+) serves as cofactor.

The protein resides in the endoplasmic reticulum membrane. The protein localises to the golgi apparatus. It localises to the trans-Golgi network. Its subcellular location is the golgi apparatus membrane. It is found in the early endosome membrane. The protein resides in the cytoplasmic vesicle membrane. The protein localises to the cleavage furrow. It localises to the cell projection. Its subcellular location is the neuron projection. The catalysed reaction is GTP + H2O = GDP + phosphate + H(+). Its activity is regulated as follows. Regulated by guanine nucleotide exchange factors (GEFs) including ANKRD27 and RABGEF1, which promote the exchange of bound GDP for free GTP. Regulated by GTPase activating proteins (GAPs) which increase the GTP hydrolysis activity. Inhibited by GDP dissociation inhibitors (GDIs). Its function is as follows. The small GTPases Rab are key regulators of intracellular membrane trafficking, from the formation of transport vesicles to their fusion with membranes. Rabs cycle between an inactive GDP-bound form and an active GTP-bound form that is able to recruit to membranes different sets of downstream effectors directly responsible for vesicle formation, movement, tethering and fusion. RAB21 is involved in membrane trafficking control. Regulates integrin internalization and recycling, but does not influence the traffic of endosomally translocated receptors in general. As a result, may regulate cell adhesion and migration. During the mitosis of adherent cells, controls the endosomal trafficking of integrins which is required for the successful completion of cytokinesis. Involved in neurite growth. Modulates protein levels of the cargo receptors TMED2 and TMED10, and required for appropriate Golgi localization of TMED10. This chain is Ras-related protein Rab-21 (RAB21), found in Canis lupus familiaris (Dog).